The following is a 189-amino-acid chain: Interferon alpha-1 (189 aa).

Positions Met1–Gly23 are cleaved as a signal peptide. 2 disulfides stabilise this stretch: Cys24-Cys122 and Cys52-Cys162.

It belongs to the alpha/beta interferon family. As to quaternary structure, interacts with CR2.

The protein localises to the secreted. Produced by macrophages, IFN-alpha have antiviral activities. Interferon stimulates the production of two enzymes: a protein kinase and an oligoadenylate synthetase. The sequence is that of Interferon alpha-1 from Sus scrofa (Pig).